Reading from the N-terminus, the 229-residue chain is Putative ankyrin repeat protein L148 (229 aa).

ANK repeat units lie at residues 70-95 (ILDYALYFSCGIGNVRIIKEMIPDNY), 96-126 (IGTEKLIFAAIQNDQDSVIDFFASRGFDLRI), 127-156 (NNDYLLRLAAEMNSLKTAKYLVSKGANCQA), and 157-186 (YNNAPLQKASINGHFEMVKFLVENGASVAA).

The sequence is that of Putative ankyrin repeat protein L148 from Acanthamoeba polyphaga (Amoeba).